Consider the following 250-residue polypeptide: PHD finger protein ALFIN-LIKE 3 (250 aa).

Methionine 1 is modified (N-acetylmethionine). The tract at residues aspartate 146–histidine 192 is disordered. The segment covering serine 149–lysine 163 has biased composition (low complexity). Acidic residues predominate over residues glutamate 179–histidine 192. The segment at glutamate 194 to lysine 246 adopts a PHD-type zinc-finger fold.

Belongs to the Alfin family. In terms of tissue distribution, ubiquitously expressed.

It is found in the nucleus. In terms of biological role, histone-binding component that specifically recognizes H3 tails trimethylated on 'Lys-4' (H3K4me3), which mark transcription start sites of virtually all active genes. The protein is PHD finger protein ALFIN-LIKE 3 (AL3) of Arabidopsis thaliana (Mouse-ear cress).